Here is a 398-residue protein sequence, read N- to C-terminus: Aspartic protease 3 (398 aa).

Positions 1–17 (MSGRVFLLLALVALASA) are cleaved as a signal peptide. A propeptide spans 18–55 (IQRIKLEKRTYTREQYKFGSIQEHLKAKYVPGYIPNKD) (removed in mature form). The 324-residue stretch at 69 to 392 (YYGPVTIGTP…DHGNKRVGFA (324 aa)) folds into the Peptidase A1 domain. Residue aspartate 87 is part of the active site. Residues cysteine 100 and cysteine 107 are joined by a disulfide bond. Aspartate 279 is a catalytic residue. Cysteine 313 and cysteine 351 are disulfide-bonded. An N-linked (GlcNAc...) asparagine glycan is attached at asparagine 321.

This sequence belongs to the peptidase A1 family. As to expression, highly expressed in intestine and to a lower extent in body wall muscles, hypodermis and neurons.

The protein resides in the cytoplasm. The protein localises to the lysosome. It localises to the secreted. Functionally, aspartic protease. Part of the necrosis cell death pathway. Involved in neuronal cell degeneration. Involved in heat stress response. In Caenorhabditis elegans, this protein is Aspartic protease 3.